A 580-amino-acid polypeptide reads, in one-letter code: Rap guanine nucleotide exchange factor 5 (580 aa).

The N-terminal Ras-GEF domain occupies aspartate 67–glycine 200. One can recognise a Ras-GEF domain in the interval asparagine 344–arginine 579.

As to expression, in the embryo, expressed in young neurons of the developing telencephalon, diencephalon and hindbrain. Not expressed in progenitor cells in the ventricular zone.

It is found in the nucleus. Functionally, guanine nucleotide exchange factor (GEF) for RAP1A, RAP2A and MRAS/M-Ras-GTP. Its association with MRAS inhibits Rap1 activation. The polypeptide is Rap guanine nucleotide exchange factor 5 (Rapgef5) (Rattus norvegicus (Rat)).